A 409-amino-acid polypeptide reads, in one-letter code: Serine/threonine transporter SstT (409 aa).

The next 9 membrane-spanning stretches (helical) occupy residues 17–37 (LVGQIIVGLIAGLLLASFFPA), 49–69 (FVSALKAVAPVLVFVLVMASI), 83–103 (ILLLYLVGTFSAAVVAVIASF), 142–162 (ALISANFIGILAWAIGLGIAF), 180–200 (VSLIVKVVIRFAPLGIFGLVA), 218–238 (LVVLLGCMLFVAFVVNPLIVF), 301–321 (GAAITITVLTLAAVHTLGIAV), 331–351 (VVASICACGASGVAGGSLLLI), and 357–377 (LFGIPSEVAMQVVAVGFIIAI).

Belongs to the dicarboxylate/amino acid:cation symporter (DAACS) (TC 2.A.23) family.

It localises to the cell inner membrane. The catalysed reaction is L-serine(in) + Na(+)(in) = L-serine(out) + Na(+)(out). It carries out the reaction L-threonine(in) + Na(+)(in) = L-threonine(out) + Na(+)(out). Functionally, involved in the import of serine and threonine into the cell, with the concomitant import of sodium (symport system). The chain is Serine/threonine transporter SstT from Pseudomonas aeruginosa (strain LESB58).